Consider the following 139-residue polypeptide: ATP synthase epsilon chain (139 aa).

This sequence belongs to the ATPase epsilon chain family. In terms of assembly, F-type ATPases have 2 components, CF(1) - the catalytic core - and CF(0) - the membrane proton channel. CF(1) has five subunits: alpha(3), beta(3), gamma(1), delta(1), epsilon(1). CF(0) has three main subunits: a, b and c.

It is found in the cell inner membrane. Produces ATP from ADP in the presence of a proton gradient across the membrane. The polypeptide is ATP synthase epsilon chain (Nitrosospira multiformis (strain ATCC 25196 / NCIMB 11849 / C 71)).